A 169-amino-acid polypeptide reads, in one-letter code: Peptide methionine sulfoxide reductase MsrA (169 aa).

The active site involves cysteine 10.

The protein belongs to the MsrA Met sulfoxide reductase family.

It carries out the reaction L-methionyl-[protein] + [thioredoxin]-disulfide + H2O = L-methionyl-(S)-S-oxide-[protein] + [thioredoxin]-dithiol. The enzyme catalyses [thioredoxin]-disulfide + L-methionine + H2O = L-methionine (S)-S-oxide + [thioredoxin]-dithiol. In terms of biological role, has an important function as a repair enzyme for proteins that have been inactivated by oxidation. Catalyzes the reversible oxidation-reduction of methionine sulfoxide in proteins to methionine. In Streptococcus pyogenes serotype M6 (strain ATCC BAA-946 / MGAS10394), this protein is Peptide methionine sulfoxide reductase MsrA.